The primary structure comprises 275 residues: 3-methyl-2-oxobutanoate hydroxymethyltransferase (275 aa).

Mg(2+)-binding residues include Asp-44 and Asp-83. Residues 44-45 (DS), Asp-83, and Lys-113 each bind 3-methyl-2-oxobutanoate. Glu-115 is a binding site for Mg(2+). Residue Glu-182 is the Proton acceptor of the active site.

Belongs to the PanB family. As to quaternary structure, homodecamer; pentamer of dimers. It depends on Mg(2+) as a cofactor.

It is found in the cytoplasm. It carries out the reaction 3-methyl-2-oxobutanoate + (6R)-5,10-methylene-5,6,7,8-tetrahydrofolate + H2O = 2-dehydropantoate + (6S)-5,6,7,8-tetrahydrofolate. Its pathway is cofactor biosynthesis; (R)-pantothenate biosynthesis; (R)-pantoate from 3-methyl-2-oxobutanoate: step 1/2. Its function is as follows. Catalyzes the reversible reaction in which hydroxymethyl group from 5,10-methylenetetrahydrofolate is transferred onto alpha-ketoisovalerate to form ketopantoate. The chain is 3-methyl-2-oxobutanoate hydroxymethyltransferase from Clostridioides difficile (strain 630) (Peptoclostridium difficile).